A 287-amino-acid chain; its full sequence is Elongation factor Ts (287 aa).

Residues threonine 80 to leucine 83 form an involved in Mg(2+) ion dislocation from EF-Tu region.

Belongs to the EF-Ts family.

The protein localises to the cytoplasm. Its function is as follows. Associates with the EF-Tu.GDP complex and induces the exchange of GDP to GTP. It remains bound to the aminoacyl-tRNA.EF-Tu.GTP complex up to the GTP hydrolysis stage on the ribosome. This is Elongation factor Ts from Pseudomonas putida (strain W619).